The following is a 137-amino-acid chain: Histone H2B (137 aa).

A compositionally biased stretch (basic and acidic residues) spans 1–10 (MPPKAADKKP). Residues 1 to 45 (MPPKAADKKPANKAPATASKAPEKKDAGKKTAASGEKKKRTKARK) are disordered. An N6-acetyllysine; alternate mark is found at K8 and K9. Glycyl lysine isopeptide (Lys-Gly) (interchain with G-Cter in SUMO); alternate cross-links involve residues K8 and K9. K13 is subject to N6-acetyllysine. K24 bears the N6-acetyllysine; alternate mark. K24 is covalently cross-linked (Glycyl lysine isopeptide (Lys-Gly) (interchain with G-Cter in SUMO); alternate). K25 is covalently cross-linked (Glycyl lysine isopeptide (Lys-Gly) (interchain with G-Cter in SUMO)). A Glycyl lysine isopeptide (Lys-Gly) (interchain with G-Cter in ubiquitin) cross-link involves residue K131.

This sequence belongs to the histone H2B family. The nucleosome is a histone octamer containing two molecules each of H2A, H2B, H3 and H4 assembled in one H3-H4 heterotetramer and two H2A-H2B heterodimers. The octamer wraps approximately 147 bp of DNA. In terms of processing, monoubiquitinated to form H2BK123ub1. H2BK123ub1 gives a specific tag for epigenetic transcriptional activation and is also prerequisite for H3K4me and H3K79me formation. H2BK123ub1 also modulates the formation of double-strand breaks during meiosis and is a prerequisite for DNA-damage checkpoint activation. Acetylated by GCN5 to form H2BK11ac and H2BK16ac. H2BK16ac can also be formed by ESA1. Acetylation of N-terminal lysines and particularly formation of H2BK11acK16ac has a positive effect on transcription. Post-translationally, sumoylation to form H2BK6su or H2BK7su, and probably also H2BK16su or H2BK17su, occurs preferentially near the telomeres and represses gene transcription.

The protein resides in the nucleus. It is found in the chromosome. Functionally, core component of nucleosome. Nucleosomes wrap and compact DNA into chromatin, limiting DNA accessibility to the cellular machineries which require DNA as a template. Histones thereby play a central role in transcription regulation, DNA repair, DNA replication and chromosomal stability. DNA accessibility is regulated via a complex set of post-translational modifications of histones, also called histone code, and nucleosome remodeling. This is Histone H2B (HTB1) from Podospora anserina (Pleurage anserina).